Here is a 109-residue protein sequence, read N- to C-terminus: Flagellar hook-basal body complex protein FliE (109 aa).

This sequence belongs to the FliE family.

The protein localises to the bacterial flagellum basal body. This chain is Flagellar hook-basal body complex protein FliE, found in Stutzerimonas stutzeri (strain A1501) (Pseudomonas stutzeri).